The sequence spans 217 residues: Adenosylcobinamide-GDP ribazoletransferase (217 aa).

The next 5 helical transmembrane spans lie at A6 to A26, G39 to M61, G95 to S115, P116 to F136, and A162 to L182.

Belongs to the CobS family. The cofactor is Mg(2+).

Its subcellular location is the cell membrane. It carries out the reaction alpha-ribazole + adenosylcob(III)inamide-GDP = adenosylcob(III)alamin + GMP + H(+). The catalysed reaction is alpha-ribazole 5'-phosphate + adenosylcob(III)inamide-GDP = adenosylcob(III)alamin 5'-phosphate + GMP + H(+). Its pathway is cofactor biosynthesis; adenosylcobalamin biosynthesis; adenosylcobalamin from cob(II)yrinate a,c-diamide: step 7/7. Its function is as follows. Joins adenosylcobinamide-GDP and alpha-ribazole to generate adenosylcobalamin (Ado-cobalamin). Also synthesizes adenosylcobalamin 5'-phosphate from adenosylcobinamide-GDP and alpha-ribazole 5'-phosphate. The protein is Adenosylcobinamide-GDP ribazoletransferase of Pyrobaculum calidifontis (strain DSM 21063 / JCM 11548 / VA1).